The chain runs to 2297 residues: Serine/threonine-protein kinase WNK2 (2297 aa).

A compositionally biased stretch (basic and acidic residues) spans 1–10; the sequence is MDGDGGRRDV. Disordered regions lie at residues 1-75 and 89-183; these read MDGD…QRRV and ARGR…EDDL. Arginine 19 and arginine 30 each carry omega-N-methylarginine. Position 45 is a phosphoserine (serine 45). Low complexity predominate over residues 92–120; it reads RPAAPAPAALVAQPGAPGAPADAGPEPVG. The segment covering 142 to 172 has biased composition (basic and acidic residues); sequence GPREEAAATVRKEDEGAAEAKPEPGRTRRDE. Acidic residues predominate over residues 173 to 182; sequence PEEEEDDEDD. In terms of domain architecture, Protein kinase spans 195–453; it reads LKFDIELGRG…IKDLLSHAFF (259 aa). Residues serine 205, 275–278, and lysine 325 contribute to the ATP site; that span reads TELM. Residue aspartate 342 is the Proton acceptor of the active site. Phosphoserine; by autocatalysis occurs at positions 352 and 356. A Phosphoserine modification is found at serine 560. Disordered regions lie at residues 579–630, 699–751, 917–1022, 1117–1185, 1262–1297, 1323–1345, 1374–1480, and 1492–1586; these read AQAG…DSQS, FPDP…PVVP, PQMA…PGSQ, PVQE…ERAS, SEDT…SQAN, APEA…ASQG, SAQS…HEAP, and PCTP…DSTI. Residues 604 to 625 are compositionally biased toward polar residues; it reads PTSATSLASDSTFDSGQGSTVY. Pro residues-rich tracts occupy residues 709–740 and 939–1007; these read VLPP…PTPL and PPQP…PLQP. The residue at position 1150 (serine 1150) is a Phosphoserine. The segment covering 1167 to 1178 has biased composition (basic residues); that stretch reads ARKHHRRSTRAR. Phosphoserine is present on serine 1262. The segment covering 1392–1406 has biased composition (polar residues); sequence SKEQPSFLASQQLLS. Pro residues predominate over residues 1411–1426; the sequence is SNPPGAPPAPLAPSSP. 2 stretches are compositionally biased toward polar residues: residues 1439-1453 and 1461-1473; these read ATST…TASQ and QGLT…SQPL. Pro residues predominate over residues 1510–1520; the sequence is EPLPPPAPEPS. A compositionally biased stretch (low complexity) spans 1526–1544; that stretch reads PQPALGQPAPLLPAAVGAV. Positions 1552–1565 are enriched in pro residues; that stretch reads PSPPLGPTVPPQPP. Serine 1588 bears the Phosphoserine mark. Residues 1621–1631 show a composition bias toward basic and acidic residues; sequence TLEPLRGDQPR. A disordered region spans residues 1621–1865; that stretch reads TLEPLRGDQP…PVQKQASLPV (245 aa). Positions 1675–1688 are enriched in polar residues; the sequence is QGTSSSMTAESSPR. Serine 1685 carries the phosphoserine modification. Residues 1721-1731 show a composition bias toward basic and acidic residues; the sequence is ARVEPTDRDGG. Residues serine 1736, serine 1817, serine 1818, serine 1862, and serine 1889 each carry the phosphoserine modification. Disordered stretches follow at residues 1970–1990 and 2011–2031; these read NVGF…SKSK and TGHL…QASV. The span at 1981–1990 shows a compositional bias: basic residues; the sequence is GRRRKTSKSK. Serine 2067 is subject to Phosphoserine. Disordered stretches follow at residues 2123–2142 and 2269–2297; these read SRSS…QPAL and CCGH…PVRS. The segment covering 2272–2289 has biased composition (polar residues); sequence HSTQPRGGQRVGSKTASF.

The protein belongs to the protein kinase superfamily. Ser/Thr protein kinase family. WNK subfamily. In terms of assembly, forms a complex with the phosphorylated form of STK39. Mg(2+) is required as a cofactor. Post-translationally, autophosphorylated. Autophosphorylation at Ser-352 and Ser-356 promotes its activity. In terms of tissue distribution, expressed in various cancer cell lines (at protein level). Predominantly expressed in heart, brain, skeletal muscle and colon.

The protein localises to the cytoplasm. It localises to the cell membrane. It catalyses the reaction L-seryl-[protein] + ATP = O-phospho-L-seryl-[protein] + ADP + H(+). It carries out the reaction L-threonyl-[protein] + ATP = O-phospho-L-threonyl-[protein] + ADP + H(+). With respect to regulation, activation requires autophosphorylation of Ser-356 and, to a lower extent, Ser-352. Functionally, serine/threonine-protein kinase component of the WNK2-SPAK/OSR1 kinase cascade, which plays an important role in the regulation of electrolyte homeostasis, cell signaling, survival, and proliferation. The WNK2-SPAK/OSR1 kinase cascade is composed of WNK2, which mediates phosphorylation and activation of downstream kinases OXSR1/OSR1 and STK39/SPAK. Following activation, OXSR1/OSR1 and STK39/SPAK catalyze phosphorylation of ion cotransporters, regulating their activity. Acts as an activator and inhibitor of sodium-coupled chloride cotransporters and potassium-coupled chloride cotransporters respectively. Activates SLC12A2, SCNN1A, SCNN1B, SCNN1D and SGK1 and inhibits SLC12A5. Negatively regulates the EGF-induced activation of the ERK/MAPK-pathway and the downstream cell cycle progression. Affects MAPK3/MAPK1 activity by modulating the activity of MAP2K1 and this modulation depends on phosphorylation of MAP2K1 by PAK1. WNK2 acts by interfering with the activity of PAK1 by controlling the balance of the activity of upstream regulators of PAK1 activity, RHOA and RAC1, which display reciprocal activity. This chain is Serine/threonine-protein kinase WNK2, found in Homo sapiens (Human).